A 492-amino-acid chain; its full sequence is 2,3-bisphosphoglycerate-independent phosphoglycerate mutase (492 aa).

Residues Asp11 and Ser61 each coordinate Mn(2+). Ser61 serves as the catalytic Phosphoserine intermediate. Residues His118, 147-148 (RD), Arg178, Arg184, 248-251 (RNDR), and Lys320 contribute to the substrate site. Residues Asp386, His390, Asp427, His428, and His445 each coordinate Mn(2+).

It belongs to the BPG-independent phosphoglycerate mutase family. In terms of assembly, monomer. Requires Mn(2+) as cofactor.

It catalyses the reaction (2R)-2-phosphoglycerate = (2R)-3-phosphoglycerate. Its pathway is carbohydrate degradation; glycolysis; pyruvate from D-glyceraldehyde 3-phosphate: step 3/5. In terms of biological role, catalyzes the interconversion of 2-phosphoglycerate and 3-phosphoglycerate. In Campylobacter jejuni (strain RM1221), this protein is 2,3-bisphosphoglycerate-independent phosphoglycerate mutase.